The following is a 487-amino-acid chain: Glutamyl-tRNA(Gln) amidotransferase subunit A (487 aa).

Active-site charge relay system residues include Lys-76 and Ser-151. Residue Ser-175 is the Acyl-ester intermediate of the active site.

The protein belongs to the amidase family. GatA subfamily. As to quaternary structure, heterotrimer of A, B and C subunits.

It catalyses the reaction L-glutamyl-tRNA(Gln) + L-glutamine + ATP + H2O = L-glutaminyl-tRNA(Gln) + L-glutamate + ADP + phosphate + H(+). In terms of biological role, allows the formation of correctly charged Gln-tRNA(Gln) through the transamidation of misacylated Glu-tRNA(Gln) in organisms which lack glutaminyl-tRNA synthetase. The reaction takes place in the presence of glutamine and ATP through an activated gamma-phospho-Glu-tRNA(Gln). The chain is Glutamyl-tRNA(Gln) amidotransferase subunit A from Azoarcus sp. (strain BH72).